Reading from the N-terminus, the 110-residue chain is Secreted RxLR effector protein 89 (110 aa).

Residues 1–22 (MTSVVIVVSVAVLLGVLVITDS) form the signal peptide. Residue N29 is glycosylated (N-linked (GlcNAc...) asparagine). The RxLR-dEER signature appears at 61-74 (RHLRTILQWWQERR).

The protein belongs to the RxLR effector family.

It localises to the secreted. Its subcellular location is the host nucleus. It is found in the host cytoplasm. Functionally, secreted effector that completely suppresses the host cell death induced by cell death-inducing proteins. The protein is Secreted RxLR effector protein 89 of Plasmopara viticola (Downy mildew of grapevine).